A 326-amino-acid polypeptide reads, in one-letter code: D-amino-acid oxidase (326 aa).

FAD contacts are provided by Gly-14, Val-15, Ile-16, Asp-36, Ser-44, Ala-48, Ala-49, Ile-50, and Val-157. D-proline contacts are provided by Tyr-219 and Arg-274. D-serine contacts are provided by Tyr-219 and Arg-274. Residues Arg-274, Gly-299, Gly-300, Gly-302, and Thr-304 each coordinate FAD. Gly-300 provides a ligand contact to D-proline. Position 300 (Gly-300) interacts with D-serine.

This sequence belongs to the DAMOX/DASOX family. As to quaternary structure, homodimer. It depends on FAD as a cofactor.

It localises to the cytoplasm. It is found in the secreted. The protein resides in the cell wall. It carries out the reaction a D-alpha-amino acid + O2 + H2O = a 2-oxocarboxylate + H2O2 + NH4(+). It catalyses the reaction D-phenylalanine + O2 + H2O = 3-phenylpyruvate + H2O2 + NH4(+). The enzyme catalyses D-lysine + O2 + H2O = 6-amino-2-oxohexanoate + H2O2 + NH4(+). The catalysed reaction is D-methionine + O2 + H2O = 4-methylsulfanyl-2-oxobutanoate + H2O2 + NH4(+). It carries out the reaction D-arginine + O2 + H2O = 5-guanidino-2-oxopentanoate + H2O2 + NH4(+). It catalyses the reaction D-ornithine + O2 + H2O = 5-amino-2-oxopentanoate + H2O2 + NH4(+). The enzyme catalyses D-leucine + O2 + H2O = 4-methyl-2-oxopentanoate + H2O2 + NH4(+). The catalysed reaction is D-alanine + O2 + H2O = pyruvate + H2O2 + NH4(+). It carries out the reaction D-valine + O2 + H2O = 3-methyl-2-oxobutanoate + H2O2 + NH4(+). It catalyses the reaction D-histidine + O2 + H2O = 3-(imidazol-5-yl)pyruvate + H2O2 + NH4(+). Functionally, catalyzes the oxidative deamination of D-amino acids with broad substrate specificity. The polypeptide is D-amino-acid oxidase (Glutamicibacter protophormiae (Brevibacterium protophormiae)).